Reading from the N-terminus, the 366-residue chain is Cobalt-precorrin-5B C(1)-methyltransferase (366 aa).

The protein belongs to the CbiD family.

It carries out the reaction Co-precorrin-5B + S-adenosyl-L-methionine = Co-precorrin-6A + S-adenosyl-L-homocysteine. Its pathway is cofactor biosynthesis; adenosylcobalamin biosynthesis; cob(II)yrinate a,c-diamide from sirohydrochlorin (anaerobic route): step 6/10. Its function is as follows. Catalyzes the methylation of C-1 in cobalt-precorrin-5B to form cobalt-precorrin-6A. This chain is Cobalt-precorrin-5B C(1)-methyltransferase, found in Pseudomonas paraeruginosa (strain DSM 24068 / PA7) (Pseudomonas aeruginosa (strain PA7)).